A 212-amino-acid polypeptide reads, in one-letter code: External core antigen (212 aa).

The N-terminal stretch at 1-19 (MQLFPLCLIISCSCPTVQA) is a signal peptide. Residues 25 to 27 (GWL) form an HBEAG region. Residues 165-212 (NAPILSTLPETTVVRRRGRSPRRRTPSPRRRRSQSPRRRRSQSRESQC) are disordered. Basic residues predominate over residues 178–205 (VRRRGRSPRRRTPSPRRRRSQSPRRRRS). Residues 184–190 (SPRRRTP) form a 1; half-length repeat. Residues 184-206 (SPRRRTPSPRRRRSQSPRRRRSQ) form a 3 X 8 AA repeats of S-P-R-R-R-R-S-Q region. 2 repeat units span residues 191 to 198 (SPRRRRSQ) and 199 to 206 (SPRRRRSQ).

It belongs to the orthohepadnavirus precore antigen family. As to quaternary structure, homodimerizes. Phosphorylated. In terms of processing, cleaved by host furin.

It localises to the secreted. The protein resides in the host nucleus. Its function is as follows. May regulate immune response to the intracellular capsid in acting as a T-cell tolerogen, by having an immunoregulatory effect which prevents destruction of infected cells by cytotoxic T-cells. This immune regulation may predispose to chronicity during perinatal infections and prevent severe liver injury during adult infections. The polypeptide is External core antigen (Hepatitis B virus genotype C subtype ayr (isolate Human/Japan/Okamoto/-) (HBV-C)).